Reading from the N-terminus, the 770-residue chain is Arf-GAP with coiled-coil, ANK repeat and PH domain-containing protein 2 (770 aa).

The 221-residue stretch at 6 to 226 (DFEECLKDSP…MKDLGAQLDR (221 aa)) folds into the BAR domain. The PH domain maps to 266–361 (GIVMEGYLFK…WIKAVQTSIA (96 aa)). Positions 371–392 (SEKLDKKSSPSTGSLDSGSESK) are disordered. The span at 379-388 (SPSTGSLDSG) shows a compositional bias: low complexity. Phosphoserine occurs at positions 384 and 387. The Arf-GAP domain occupies 399–520 (ESALQRVQCI…KFVDKYSTLL (122 aa)). The segment at 414-437 (CCDCGLADPRWASINLGITLCIEC) adopts a C4-type zinc-finger fold. Phosphoserine is present on Ser-521. Over residues 548–561 (TPVKSNDSGIQQCS) the composition is skewed to polar residues. Residues 548–571 (TPVKSNDSGIQQCSDDGRESLPST) are disordered. Phosphoserine is present on residues Ser-573 and Ser-576. 3 ANK repeats span residues 632–661 (NQATPLIQAVLGGSLVTCEFLLQNGANVNQ), 665–694 (QGRGPLHHATVLGHTGQVCLFLKRGANQHA), and 698–727 (EGKDPLSIAVEAANADIVTLLRLARMNEEM). Position 734 is a phosphotyrosine (Tyr-734). Position 767 is a phosphoserine (Ser-767).

Interacts with RAB35 (GTP-bound form); the interaction is direct and probably recruits ACAP2 to membranes. Interacts with MICALL1; the interaction is indirect through RAB35.

It localises to the endosome membrane. Its subcellular location is the cell membrane. GAP activity stimulated by phosphatidylinositol 4,5-bisphosphate (PIP2) and phosphatidic acid. Its function is as follows. GTPase-activating protein (GAP) for ADP ribosylation factor 6 (ARF6). Doesn't show GAP activity for RAB35. The polypeptide is Arf-GAP with coiled-coil, ANK repeat and PH domain-containing protein 2 (Acap2) (Rattus norvegicus (Rat)).